The following is a 348-amino-acid chain: tRNA pseudouridine synthase D (348 aa).

F26 contributes to the substrate binding site. D79 serves as the catalytic Nucleophile. Substrate is bound at residue N128. One can recognise a TRUD domain in the interval 154-302 (GVPNYFGSQR…VDPARRALLL (149 aa)). Position 328 (F328) interacts with substrate.

This sequence belongs to the pseudouridine synthase TruD family.

The enzyme catalyses uridine(13) in tRNA = pseudouridine(13) in tRNA. In terms of biological role, responsible for synthesis of pseudouridine from uracil-13 in transfer RNAs. This chain is tRNA pseudouridine synthase D, found in Serratia proteamaculans (strain 568).